We begin with the raw amino-acid sequence, 310 residues long: Olfactory receptor 5T7 (310 aa).

At 1-23 (MENITEVTEFILMGFTDNADLEI) the chain is on the extracellular side. N-linked (GlcNAc...) asparagine glycosylation is present at Asn-3. Residues 24–44 (LSFFLFLAIYLFTLMGNLGLI) form a helical membrane-spanning segment. At 45-52 (TLVIGDSR) the chain is on the cytoplasmic side. Residues 53-73 (LHNPMYYFLSVLSSVDACYST) form a helical membrane-spanning segment. Topologically, residues 74-97 (VITPQMVVDFVSEKKVISFIGCAT) are extracellular. A disulfide bridge links Cys-95 with Cys-187. A helical transmembrane segment spans residues 98–118 (QMFLAVTFGTTECFLLAAMAY). Over 119-131 (DRYVAIHNPLMYV) the chain is Cytoplasmic. The helical transmembrane segment at 132 to 152 (VSMSPRVYVPLIIASYAGGIL) threads the bilayer. At 153-194 (HAVIHTVATFRLSFCGSNKISHIFCDIPPLLAISCSDTHFNQ) the chain is on the extracellular side. Residues 195-215 (LLLFYCAGFIEVVTILIVLLS) form a helical membrane-spanning segment. Over 216-235 (YGFILSVILKTRSTEGKRKV) the chain is Cytoplasmic. A helical transmembrane segment spans residues 236-256 (FSTCGSHLMAVSTFHGTVLFM). Topologically, residues 257–269 (YVRPSDSYALEHD) are extracellular. Residues 270 to 290 (MMVSIFYSIVIPMLNPLIYSL) form a helical membrane-spanning segment. Residues 291–310 (RNKDVKEAIKKVFGKRILCG) are Cytoplasmic-facing.

It belongs to the G-protein coupled receptor 1 family.

It localises to the cell membrane. Potential odorant receptor. The protein is Olfactory receptor 5T7 of Mus musculus (Mouse).